We begin with the raw amino-acid sequence, 183 residues long: MRKIVVAAIAVSLTTVSITASASADPSKDSKAQVSAAEAGITGTWYNQLGSTFIVTAGADGALTGTYESAVGNAESRYVLTGRYDSAPATDGSGTALGWTVAWKNNYRNAHSATTWSGQYVGGAEARINTQWLLTSGTTEANAWKSTLVGHDTFTKVKPSAASIDAAKKAGVNNGNPLDAVQQ.

An N-terminal signal peptide occupies residues 1–24; the sequence is MRKIVVAAIAVSLTTVSITASASA. An Avidin-like domain is found at 37 to 159; the sequence is AEAGITGTWY…GHDTFTKVKP (123 aa). Biotin is bound by residues Tyr67 and Tyr78. Residues 83 to 85 carry the Cell attachment site; atypical motif; sequence RYD. The biotin site is built by Trp116, Trp132, and Trp144.

This sequence belongs to the avidin/streptavidin family. Homotetramer.

The protein localises to the secreted. Its function is as follows. The biological function of streptavidin is not known. Forms a strong non-covalent specific complex with biotin (one molecule of biotin per subunit of streptavidin). This is Streptavidin from Streptomyces avidinii.